We begin with the raw amino-acid sequence, 140 residues long: Large ribosomal subunit protein uL11 (140 aa).

It belongs to the universal ribosomal protein uL11 family. In terms of assembly, part of the ribosomal stalk of the 50S ribosomal subunit. Interacts with L10 and the large rRNA to form the base of the stalk. L10 forms an elongated spine to which L12 dimers bind in a sequential fashion forming a multimeric L10(L12)X complex. Post-translationally, one or more lysine residues are methylated.

Its function is as follows. Forms part of the ribosomal stalk which helps the ribosome interact with GTP-bound translation factors. This is Large ribosomal subunit protein uL11 from Dehalococcoides mccartyi (strain ATCC BAA-2100 / JCM 16839 / KCTC 5957 / BAV1).